Here is a 478-residue protein sequence, read N- to C-terminus: Aspartyl/glutamyl-tRNA(Asn/Gln) amidotransferase subunit B 2 (478 aa).

It belongs to the GatB/GatE family. GatB subfamily. As to quaternary structure, heterotrimer of A, B and C subunits.

It catalyses the reaction L-glutamyl-tRNA(Gln) + L-glutamine + ATP + H2O = L-glutaminyl-tRNA(Gln) + L-glutamate + ADP + phosphate + H(+). It carries out the reaction L-aspartyl-tRNA(Asn) + L-glutamine + ATP + H2O = L-asparaginyl-tRNA(Asn) + L-glutamate + ADP + phosphate + 2 H(+). Allows the formation of correctly charged Asn-tRNA(Asn) or Gln-tRNA(Gln) through the transamidation of misacylated Asp-tRNA(Asn) or Glu-tRNA(Gln) in organisms which lack either or both of asparaginyl-tRNA or glutaminyl-tRNA synthetases. The reaction takes place in the presence of glutamine and ATP through an activated phospho-Asp-tRNA(Asn) or phospho-Glu-tRNA(Gln). The chain is Aspartyl/glutamyl-tRNA(Asn/Gln) amidotransferase subunit B 2 (gatB2) from Clostridium acetobutylicum (strain ATCC 824 / DSM 792 / JCM 1419 / IAM 19013 / LMG 5710 / NBRC 13948 / NRRL B-527 / VKM B-1787 / 2291 / W).